A 331-amino-acid chain; its full sequence is Phosphate acyltransferase (331 aa).

The protein belongs to the PlsX family. As to quaternary structure, homodimer. Probably interacts with PlsY.

Its subcellular location is the cytoplasm. The enzyme catalyses a fatty acyl-[ACP] + phosphate = an acyl phosphate + holo-[ACP]. It functions in the pathway lipid metabolism; phospholipid metabolism. Its function is as follows. Catalyzes the reversible formation of acyl-phosphate (acyl-PO(4)) from acyl-[acyl-carrier-protein] (acyl-ACP). This enzyme utilizes acyl-ACP as fatty acyl donor, but not acyl-CoA. This chain is Phosphate acyltransferase, found in Ureaplasma urealyticum serovar 10 (strain ATCC 33699 / Western).